Consider the following 567-residue polypeptide: SRSF protein kinase 3 (567 aa).

The span at 1–16 shows a compositional bias: gly residues; that stretch reads MSASTGGGGDSGGSGG. A disordered region spans residues 1–36; sequence MSASTGGGGDSGGSGGSSSSSQASCGPESSGSELAL. The segment covering 17-32 has biased composition (low complexity); sequence SSSSSQASCGPESSGS. Position 50 is a phosphoserine (S50). A Protein kinase domain is found at 79–565; that stretch reads YHVVRKLGWG…AADCLQHPWL (487 aa). ATP contacts are provided by residues 85–93 and K108; that span reads LGWGHFSTV. The active-site Proton acceptor is D212. Disordered regions lie at residues 238 to 283 and 298 to 351; these read QQAG…RLLE and ATQA…SQTS. Positions 248–258 are enriched in polar residues; the sequence is SIVSTAPQEVL. Basic residues predominate over residues 264–279; sequence SKNKRKKMRRKRKQQK. Low complexity predominate over residues 327-348; the sequence is AGPSPASSSPAPGGGRSLSAGS. S330 bears the Phosphoserine mark.

This sequence belongs to the protein kinase superfamily. CMGC Ser/Thr protein kinase family. As to expression, expressed in skeletal and heart muscle. Also expressed in the fetal brain.

It localises to the nucleus. It is found in the cytoplasm. It carries out the reaction L-seryl-[protein] + ATP = O-phospho-L-seryl-[protein] + ADP + H(+). The catalysed reaction is L-threonyl-[protein] + ATP = O-phospho-L-threonyl-[protein] + ADP + H(+). Functionally, serine/arginine-rich protein-specific kinase which specifically phosphorylates its substrates at serine residues located in regions rich in arginine/serine dipeptides, known as RS domains. Phosphorylates the SR splicing factor SRSF1 and the lamin-B receptor (LBR) in vitro. Required for normal muscle development. This chain is SRSF protein kinase 3 (SRPK3), found in Homo sapiens (Human).